We begin with the raw amino-acid sequence, 111 residues long: PCNA-associated factor (111 aa).

Polar residues predominate over residues 1–10 (MVRTKANSVP). Residues 1-111 (MVRTKANSVP…PPDHTDDEKE (111 aa)) are disordered. Position 8 is a phosphoserine (S8). K15 participates in a covalent cross-link: Glycyl lysine isopeptide (Lys-Gly) (interchain with G-Cter in ubiquitin). The short motif at 23-34 (RKVLGSSTSAAN) is the D-box element. An N6-acetyllysine; alternate modification is found at K24. K24 is covalently cross-linked (Glycyl lysine isopeptide (Lys-Gly) (interchain with G-Cter in ubiquitin); alternate). Polar residues predominate over residues 27–39 (GSSTSAANSTPLS). Residues S28, S31, and S72 each carry the phosphoserine modification. Positions 62-72 (QKGIGEFFSLS) match the PIP-box motif. The segment covering 74–84 (KDSEKENRIPE) has biased composition (basic and acidic residues). The short motif at 78–80 (KEN) is the KEN box element. An Initiation motif motif is present at residues 85–97 (EAGSSGLGKAKRK).

Interacts (when monoubiquitinated at Lys-15 and Lys-24) with PCNA. Interacts with isoform 2/p33ING1b of ING1. Interacts with BRCA1. Post-translationally, monoubiquitinated at Lys-15 and Lys-24 during normal S phase, promoting its association with PCNA. Also diubiquitinated at these 2 sites. Following DNA damage, monoubiquitin chains at Lys-15 and Lys-24 are probably extended, leading to disrupt the interaction with PCNA. Polyubiquitinated by the APC/C complex at the mitotic exit, leading to its degradation by the proteasome.

The protein resides in the nucleus. Its subcellular location is the cytoplasm. It localises to the perinuclear region. Its function is as follows. PCNA-binding protein that acts as a regulator of DNA repair during DNA replication. Following DNA damage, the interaction with PCNA is disrupted, facilitating the interaction between monoubiquitinated PCNA and the translesion DNA synthesis DNA polymerase eta (POLH) at stalled replisomes, facilitating the bypass of replication-fork-blocking lesions. Also acts as a regulator of centrosome number. The polypeptide is PCNA-associated factor (Bos taurus (Bovine)).